The following is a 653-amino-acid chain: Macrolide export ATP-binding/permease protein MacB (653 aa).

The ABC transporter domain maps to Ile6–Pro244. Gly42–Ser49 contributes to the ATP binding site. 4 consecutive transmembrane segments (helical) span residues Leu275–Gly295, Phe525–Met545, Phe576–Leu596, and Trp616–Trp636.

It belongs to the ABC transporter superfamily. Macrolide exporter (TC 3.A.1.122) family. As to quaternary structure, homodimer. Part of the tripartite efflux system MacAB-TolC, which is composed of an inner membrane transporter, MacB, a periplasmic membrane fusion protein, MacA, and an outer membrane component, TolC. The complex forms a large protein conduit and can translocate molecules across both the inner and outer membranes. Interacts with MacA.

Its subcellular location is the cell inner membrane. Functionally, part of the tripartite efflux system MacAB-TolC. MacB is a non-canonical ABC transporter that contains transmembrane domains (TMD), which form a pore in the inner membrane, and an ATP-binding domain (NBD), which is responsible for energy generation. Confers resistance against macrolides. The protein is Macrolide export ATP-binding/permease protein MacB of Sodalis glossinidius (strain morsitans).